The chain runs to 291 residues: Porphobilinogen deaminase (291 aa).

At cysteine 237 the chain carries S-(dipyrrolylmethanemethyl)cysteine.

Belongs to the HMBS family. In terms of assembly, monomer. It depends on dipyrromethane as a cofactor.

The enzyme catalyses 4 porphobilinogen + H2O = hydroxymethylbilane + 4 NH4(+). The protein operates within porphyrin-containing compound metabolism; protoporphyrin-IX biosynthesis; coproporphyrinogen-III from 5-aminolevulinate: step 2/4. Functionally, tetrapolymerization of the monopyrrole PBG into the hydroxymethylbilane pre-uroporphyrinogen in several discrete steps. This Clostridium perfringens (strain SM101 / Type A) protein is Porphobilinogen deaminase.